Consider the following 400-residue polypeptide: Large envelope protein (400 aa).

An N-acetylmethionine modification is found at M1. 2 disordered regions span residues 1–24 (MGGWSSKPRKGMGTNLSVPNPLGF) and 89–116 (PAMPPPASTNRQSGRQPTPISPPLRDSH). G2 carries N-myristoyl glycine; by host lipidation. Residues 2–119 (GGWSSKPRKG…PPLRDSHPQA (118 aa)) form a pre-S1 region. A pre-S region spans residues 2-174 (GGWSSKPRKG…SSRIGDPAPN (173 aa)). Residues 2–181 (GGWSSKPRKG…APNMENITSG (180 aa)) lie on the Virion surface; in external conformation side of the membrane. Residues 2 to 253 (GGWSSKPRKG…PGYRWMCLRR (252 aa)) lie on the Intravirion; in internal conformation side of the membrane. An N-linked (GlcNAc...) asparagine glycan is attached at W4. The span at 96-106 (STNRQSGRQPT) shows a compositional bias: polar residues. The pre-S2 stretch occupies residues 120 to 174 (MQWNSTAFHQALQDPRVRGLYFPAGGSSSGTLNPVPTIASHISSISSRIGDPAPN). A helical membrane pass occupies residues 182–202 (FLGPLLVLQAGFFLLTRILTI). Residues 203 to 253 (PQSLDSWWTSLNFLGGAPVCLGQNSQSPTSNHSPTSCPPICPGYRWMCLRR) lie on the Intravirion; in external conformation side of the membrane. Residues 254-274 (FIIFLFILLLCLIFLLVLLDY) traverse the membrane as a helical segment. Over 275–348 (QGMLPVCPLI…WASVRFSWLS (74 aa)) the chain is Virion surface. A glycan (N-linked (GlcNAc...) asparagine; by host) is linked at N320. The helical transmembrane segment at 349 to 369 (LLVPFVQWFVGLSPTVWLSAI) threads the bilayer. The Intravirion portion of the chain corresponds to 370–375 (WMMWYW). The chain crosses the membrane as a helical span at residues 376–398 (GPSLYNILSPFIPLLPIFFCLWV). Over 399–400 (YI) the chain is Virion surface.

Belongs to the orthohepadnavirus major surface antigen family. In terms of assembly, in its internal form (Li-HBsAg), interacts with the capsid protein and with the isoform S. Interacts with host chaperone CANX. Associates with host chaperone CANX through its pre-S2 N glycan; this association may be essential for isoform M proper secretion. As to quaternary structure, interacts with isoform L. Interacts with the antigens of satellite virus HDV (HDVAgs); this interaction is required for encapsidation of HDV genomic RNA. Post-translationally, isoform M is N-terminally acetylated by host at a ratio of 90%, and N-glycosylated by host at the pre-S2 region. Myristoylated.

Its subcellular location is the virion membrane. Its function is as follows. The large envelope protein exists in two topological conformations, one which is termed 'external' or Le-HBsAg and the other 'internal' or Li-HBsAg. In its external conformation the protein attaches the virus to cell receptors and thereby initiating infection. This interaction determines the species specificity and liver tropism. This attachment induces virion internalization predominantly through caveolin-mediated endocytosis. The large envelope protein also assures fusion between virion membrane and endosomal membrane. In its internal conformation the protein plays a role in virion morphogenesis and mediates the contact with the nucleocapsid like a matrix protein. Functionally, the middle envelope protein plays an important role in the budding of the virion. It is involved in the induction of budding in a nucleocapsid independent way. In this process the majority of envelope proteins bud to form subviral lipoprotein particles of 22 nm of diameter that do not contain a nucleocapsid. This Hepatitis B virus genotype A1 subtype adw (isolate Philippines/pFDW294/1988) (HBV-A) protein is Large envelope protein.